We begin with the raw amino-acid sequence, 356 residues long: SERTA domain-containing protein 4 (356 aa).

The disordered stretch occupies residues Ser33–Ala53. An SERTA domain is found at Ile101–Asn147. Low complexity predominate over residues Thr215 to Ser232. Disordered stretches follow at residues Thr215–Pro238, Lys280–Val302, and Trp332–Ile356. Residues Lys280–Arg292 are compositionally biased toward basic and acidic residues.

The protein is SERTA domain-containing protein 4 (SERTAD4) of Homo sapiens (Human).